The primary structure comprises 89 residues: UPF0223 protein BCA_4066 (89 aa).

It belongs to the UPF0223 family.

This Bacillus cereus (strain 03BB102) protein is UPF0223 protein BCA_4066.